Here is a 602-residue protein sequence, read N- to C-terminus: RecBCD enzyme subunit RecD (602 aa).

174-181 (GGPGTGKT) is a binding site for ATP.

It belongs to the RecD family. Heterotrimer of RecB, RecC and RecD. All subunits contribute to DNA-binding.

The catalysed reaction is Couples ATP hydrolysis with the unwinding of duplex DNA at the replication fork by translocating in the 5'-3' direction. This creates two antiparallel DNA single strands (ssDNA). The leading ssDNA polymer is the template for DNA polymerase III holoenzyme which synthesizes a continuous strand.. The enzyme catalyses ATP + H2O = ADP + phosphate + H(+). Its function is as follows. A helicase/nuclease that prepares dsDNA breaks (DSB) for recombinational DNA repair. Binds to DSBs and unwinds DNA via a highly rapid and processive ATP-dependent bidirectional helicase activity. Unwinds dsDNA until it encounters a Chi (crossover hotspot instigator) sequence from the 3' direction. Cuts ssDNA a few nucleotides 3' to the Chi site. The properties and activities of the enzyme are changed at Chi. The Chi-altered holoenzyme produces a long 3'-ssDNA overhang and facilitates RecA-binding to the ssDNA for homologous DNA recombination and repair. Holoenzyme degrades any linearized DNA that is unable to undergo homologous recombination. In the holoenzyme this subunit has ssDNA-dependent ATPase and 5'-3' helicase activity. When added to pre-assembled RecBC greatly stimulates nuclease activity and augments holoenzyme processivity. Negatively regulates the RecA-loading ability of RecBCD. The protein is RecBCD enzyme subunit RecD of Buchnera aphidicola subsp. Schizaphis graminum (strain Sg).